Reading from the N-terminus, the 310-residue chain is Translocator protein BipD (310 aa).

2 coiled-coil regions span residues 127-171 (DPIL…LQDY) and 250-299 (DTAR…AIST).

The protein belongs to the invasin protein D family.

The protein localises to the secreted. Required for invasion of epithelial cells, as well as for survival within host cells, escape from endocytic vesicles and subsequent actin-tail formation. Probably regulates the secretion of effectors BipB and BipC and their final integration into the target cell membrane. The protein is Translocator protein BipD (bipD) of Burkholderia thailandensis (strain ATCC 700388 / DSM 13276 / CCUG 48851 / CIP 106301 / E264).